The primary structure comprises 140 residues: Thioredoxin M-type, chloroplastic (140 aa).

A chloroplast-targeting transit peptide spans 1-34; that stretch reads MALVARRAAVPSARSSARPAFARAAPRRSVVVRA. Positions 35–140 constitute a Thioredoxin domain; sequence EAGAVNDDTF…IVQTVEKYLN (106 aa). Catalysis depends on nucleophile residues Cys64 and Cys67. Cys64 and Cys67 are disulfide-bonded.

Belongs to the thioredoxin family. Plant M-type subfamily. As to quaternary structure, forms a complex with heterodimeric ferredoxin-thioredoxin reductase (FTR) and ferredoxin.

Its subcellular location is the plastid. It is found in the chloroplast. Functionally, participates in various redox reactions through the reversible oxidation of the active center dithiol to a disulfide. The M form is known to activate NADP-malate dehydrogenase. This Chlamydomonas reinhardtii (Chlamydomonas smithii) protein is Thioredoxin M-type, chloroplastic (TRXM).